Here is a 230-residue protein sequence, read N- to C-terminus: Large ribosomal subunit protein uL1 (230 aa).

It belongs to the universal ribosomal protein uL1 family. Part of the 50S ribosomal subunit.

Its function is as follows. Binds directly to 23S rRNA. The L1 stalk is quite mobile in the ribosome, and is involved in E site tRNA release. Protein L1 is also a translational repressor protein, it controls the translation of the L11 operon by binding to its mRNA. The protein is Large ribosomal subunit protein uL1 of Limosilactobacillus fermentum (strain NBRC 3956 / LMG 18251) (Lactobacillus fermentum).